The primary structure comprises 439 residues: Glutamine synthetase (439 aa).

The region spanning 12–93 is the GS beta-grasp domain; it reads SKIKFVQLVF…VYGFIYKDNK (82 aa). Residues 99-439 enclose the GS catalytic domain; it reads PRGILKRALE…EWELERYFFL (341 aa). 2 residues coordinate Mg(2+): Glu-122 and Glu-124. Glu-172 provides a ligand contact to ATP. Mg(2+)-binding residues include Glu-177 and Glu-184. Gly-229 contacts L-glutamate. His-233 lines the Mg(2+) pocket. ATP contacts are provided by residues 235-237 and Ser-237; that span reads HIS. L-glutamate is bound by residues Arg-283, Glu-289, and Arg-301. The ATP site is built by Arg-301, Arg-306, and Lys-313. Glu-318 is a binding site for Mg(2+). Arg-320 lines the L-glutamate pocket.

This sequence belongs to the glutamine synthetase family. In terms of assembly, oligomer of 12 subunits arranged in the form of two hexagons. Mg(2+) is required as a cofactor.

It localises to the cytoplasm. The catalysed reaction is L-glutamate + NH4(+) + ATP = L-glutamine + ADP + phosphate + H(+). In terms of biological role, probably involved in nitrogen metabolism via ammonium assimilation. Catalyzes the ATP-dependent biosynthesis of glutamine from glutamate and ammonia. The protein is Glutamine synthetase of Pyrococcus furiosus (strain ATCC 43587 / DSM 3638 / JCM 8422 / Vc1).